The sequence spans 149 residues: Hut operon positive regulatory protein (149 aa).

The protein belongs to the HutP family. As to quaternary structure, homohexamer.

Antiterminator that binds to cis-acting regulatory sequences on the mRNA in the presence of histidine, thereby suppressing transcription termination and activating the hut operon for histidine utilization. In Geobacillus thermodenitrificans (strain NG80-2), this protein is Hut operon positive regulatory protein.